The chain runs to 1221 residues: DNA-directed RNA polymerase subunit beta (1221 aa).

A disordered region spans residues 1176–1221 (EKKKLAEEEAEIAAEAEAEGSAEEDAAEADADANEAETADDDKASK). The span at 1183-1215 (EEAEIAAEAEAEGSAEEDAAEADADANEAETAD) shows a compositional bias: acidic residues.

The protein belongs to the RNA polymerase beta chain family. The RNAP catalytic core consists of 2 alpha, 1 beta, 1 beta' and 1 omega subunit. When a sigma factor is associated with the core the holoenzyme is formed, which can initiate transcription.

The enzyme catalyses RNA(n) + a ribonucleoside 5'-triphosphate = RNA(n+1) + diphosphate. DNA-dependent RNA polymerase catalyzes the transcription of DNA into RNA using the four ribonucleoside triphosphates as substrates. This Lactobacillus delbrueckii subsp. bulgaricus (strain ATCC BAA-365 / Lb-18) protein is DNA-directed RNA polymerase subunit beta.